Reading from the N-terminus, the 122-residue chain is Large ribosomal subunit protein uL14 (122 aa).

It belongs to the universal ribosomal protein uL14 family. Part of the 50S ribosomal subunit. Forms a cluster with proteins L3 and L19. In the 70S ribosome, L14 and L19 interact and together make contacts with the 16S rRNA in bridges B5 and B8.

In terms of biological role, binds to 23S rRNA. Forms part of two intersubunit bridges in the 70S ribosome. This Chlorobium luteolum (strain DSM 273 / BCRC 81028 / 2530) (Pelodictyon luteolum) protein is Large ribosomal subunit protein uL14.